Consider the following 294-residue polypeptide: Shikimate kinase (294 aa).

87–97 (PLAGGLKSSSA) is an ATP binding site.

It belongs to the GHMP kinase family. Archaeal shikimate kinase subfamily.

It is found in the cytoplasm. The enzyme catalyses shikimate + ATP = 3-phosphoshikimate + ADP + H(+). Its pathway is metabolic intermediate biosynthesis; chorismate biosynthesis; chorismate from D-erythrose 4-phosphate and phosphoenolpyruvate: step 5/7. This Methanosarcina acetivorans (strain ATCC 35395 / DSM 2834 / JCM 12185 / C2A) protein is Shikimate kinase (aroK).